We begin with the raw amino-acid sequence, 329 residues long: Minor capsid protein A1 (329 aa).

Residues 143-162 (GPSPVPGPNPDPPLEPPPGT) form a disordered region. The span at 145-161 (SPVPGPNPDPPLEPPPG) shows a compositional bias: pro residues.

The protein localises to the virion. Functionally, minor capsid protein. This chain is Minor capsid protein A1, found in Qbeta virus (strain MX1).